The following is a 341-amino-acid chain: Putative [LysW]-lysine/[LysW]-ornithine hydrolase (341 aa).

H62 serves as a coordination point for Zn(2+). The active site involves D64. D86 contacts Zn(2+). E115 acts as the Proton acceptor in catalysis. Zn(2+) contacts are provided by E116, E140, and H309.

It belongs to the peptidase M20A family. LysK subfamily. Zn(2+) serves as cofactor. It depends on Co(2+) as a cofactor.

Its subcellular location is the cytoplasm. The catalysed reaction is [amino-group carrier protein]-C-terminal-gamma-(L-lysyl)-L-glutamate + H2O = [amino-group carrier protein]-C-terminal-L-glutamate + L-lysine. It catalyses the reaction [amino-group carrier protein]-C-terminal-gamma-(L-ornithyl)-L-glutamate + H2O = [amino-group carrier protein]-C-terminal-L-glutamate + L-ornithine. Its pathway is amino-acid biosynthesis; L-lysine biosynthesis via AAA pathway; L-lysine from L-alpha-aminoadipate (Thermus route): step 5/5. It functions in the pathway amino-acid biosynthesis; L-arginine biosynthesis. Functionally, catalyzes the release of L-lysine from [LysW]-gamma-L-lysine and the release of L-ornithine from [LysW]-L-ornithine. The sequence is that of Putative [LysW]-lysine/[LysW]-ornithine hydrolase from Pyrobaculum aerophilum (strain ATCC 51768 / DSM 7523 / JCM 9630 / CIP 104966 / NBRC 100827 / IM2).